Here is a 510-residue protein sequence, read N- to C-terminus: Probable cytosol aminopeptidase (510 aa).

Positions 254 and 259 each coordinate Mn(2+). Residue K266 is part of the active site. 3 residues coordinate Mn(2+): D277, D336, and E338. Residue R340 is part of the active site. Residues A487–A510 form a disordered region.

It belongs to the peptidase M17 family. Mn(2+) serves as cofactor.

It is found in the cytoplasm. It carries out the reaction Release of an N-terminal amino acid, Xaa-|-Yaa-, in which Xaa is preferably Leu, but may be other amino acids including Pro although not Arg or Lys, and Yaa may be Pro. Amino acid amides and methyl esters are also readily hydrolyzed, but rates on arylamides are exceedingly low.. It catalyses the reaction Release of an N-terminal amino acid, preferentially leucine, but not glutamic or aspartic acids.. In terms of biological role, presumably involved in the processing and regular turnover of intracellular proteins. Catalyzes the removal of unsubstituted N-terminal amino acids from various peptides. The chain is Probable cytosol aminopeptidase from Polaromonas naphthalenivorans (strain CJ2).